The sequence spans 448 residues: Adenylosuccinate synthetase (448 aa).

Residues 36–42 and 64–66 each bind GTP; these read GDEGKGK and GHT. The Proton acceptor role is filled by D37. Mg(2+) contacts are provided by D37 and G64. IMP contacts are provided by residues 37–40, 62–65, T154, R168, N246, T261, and R325; these read DEGK and NAGH. H65 acts as the Proton donor in catalysis. Residue 321–327 coordinates substrate; that stretch reads VTTKRKR. GTP is bound by residues R327, 353–355, and 436–438; these read KLD and GVG.

The protein belongs to the adenylosuccinate synthetase family. In terms of assembly, homodimer. Requires Mg(2+) as cofactor.

The protein resides in the cytoplasm. It carries out the reaction IMP + L-aspartate + GTP = N(6)-(1,2-dicarboxyethyl)-AMP + GDP + phosphate + 2 H(+). Its pathway is purine metabolism; AMP biosynthesis via de novo pathway; AMP from IMP: step 1/2. In terms of biological role, plays an important role in the de novo pathway and in the salvage pathway of purine nucleotide biosynthesis. Catalyzes the first committed step in the biosynthesis of AMP from IMP. This Drosophila mojavensis (Fruit fly) protein is Adenylosuccinate synthetase.